The primary structure comprises 1035 residues: Unconventional myosin IC (1035 aa).

The region spanning 21–703 is the Myosin motor domain; that stretch reads GVQDFVLLEN…TLFDTEDAYQ (683 aa). Residue 114-121 participates in ATP binding; that stretch reads GESGSGKT. Phosphoserine is present on S304. T310 carries the post-translational modification Phosphothreonine. The tract at residues 578–600 is actin-binding; sequence LNNLMDILMCKEPSYIRCIKPND. IQ domains lie at 696 to 728, 729 to 751, and 752 to 779; these read FDTE…KYLK, LRAQ…AAKK, and RREA…FNEE. The TH1 domain occupies 857–1035; the sequence is KNNYASSVST…KGHLVIIGTQ (179 aa).

It belongs to the TRAFAC class myosin-kinesin ATPase superfamily. Myosin family. As to quaternary structure, binds F-actin. In terms of tissue distribution, in the embryo, expressed in gastric caeca, midgut cells of the proventriculus, and in the mid and hindgut. In the larval and adult gut brush border, expressed in the microvilli. Also expressed at high levels in follicle cells during oogenesis.

Its subcellular location is the cytoplasm. The protein localises to the cell cortex. The protein resides in the cell membrane. Functionally, unconventional myosin that functions as actin-based motor protein with ATPase activity. Binds to membranes enriched in phosphatidylinositol 4-5-bisphosphate, and can glide along actin filaments when anchored to a lipid bilayer. Functions as antagonist for Myo31DF, an unconventional myosin with an essential role in the establishment of body left-right asymmetry. The sequence is that of Unconventional myosin IC (Myo61F) from Drosophila melanogaster (Fruit fly).